A 212-amino-acid chain; its full sequence is Adenylate kinase (212 aa).

10 to 15 contacts ATP; that stretch reads GAGKGT. Residues 30–59 form an NMP region; that stretch reads AIGDIFRTIIKTSTSEAELINNYVKQGELI. AMP-binding positions include Arg36, 57-59, 85-88, and Gln92; these read ELI and GYPR. The tract at residues 122–160 is LID; sequence GRYSCKNCGKIYNRYFVQPKTDNVCDVCGSSTFDYRKDD. Position 123 (Arg123) interacts with ATP. Zn(2+)-binding residues include Cys126 and Cys129. 132-133 is a binding site for ATP; the sequence is IY. Zn(2+) is bound by residues Cys146 and Cys149. AMP-binding residues include Arg157 and Arg168. Lys196 serves as a coordination point for ATP.

It belongs to the adenylate kinase family. Monomer.

The protein localises to the cytoplasm. The enzyme catalyses AMP + ATP = 2 ADP. The protein operates within purine metabolism; AMP biosynthesis via salvage pathway; AMP from ADP: step 1/1. Its function is as follows. Catalyzes the reversible transfer of the terminal phosphate group between ATP and AMP. Plays an important role in cellular energy homeostasis and in adenine nucleotide metabolism. This chain is Adenylate kinase, found in Rickettsia conorii (strain ATCC VR-613 / Malish 7).